The following is an 824-amino-acid chain: Dapper 1 (824 aa).

Disordered stretches follow at residues Met-1–Arg-34, Ala-61–Pro-80, Glu-131–Gly-150, Thr-454–Gln-487, and Ala-516–Gln-536. The segment at Lys-2–Ser-343 is interaction with tcf7l1. The span at Leu-11–Arg-34 shows a compositional bias: basic and acidic residues. A coiled-coil region spans residues Arg-19–Leu-47. Over residues Phe-520–Ser-530 the composition is skewed to basic and acidic residues. A PDZ-binding motif is present at residues Met-821–Val-824.

Belongs to the dapper family. As to quaternary structure, interacts with dbf4, dvl2 and tcf7l1.

It localises to the cytoplasm. The protein localises to the nucleus. Its function is as follows. Involved in regulation of intracellular signaling pathways during development. Specifically thought to play a role in canonical and/or non-canonical Wnt signaling pathways through interaction with DSH (Dishevelled) family proteins. Binds to dvl2 and regulates the degradation of ctnnb1/beta-catenin, thereby modulating the transcriptional activation of target genes of the Wnt signaling pathway. May also bind to and directly stimulate the activity of tcf7l1. The polypeptide is Dapper 1 (dact1) (Xenopus tropicalis (Western clawed frog)).